Consider the following 167-residue polypeptide: Zymogen granule membrane protein 16 (167 aa).

A signal peptide spans 1-16 (MLAVALLVLLCASASA). Positions 24–159 (SSYSGEYGGK…IDSISLHWDT (136 aa)) constitute a Jacalin-type lectin domain.

It belongs to the jacalin lectin family.

It localises to the secreted. It is found in the extracellular space. The protein resides in the extracellular matrix. The protein localises to the zymogen granule lumen. Its subcellular location is the golgi apparatus lumen. In terms of biological role, may play a role in protein trafficking. May act as a linker molecule between the submembranous matrix on the luminal side of zymogen granule membrane (ZGM) and aggregated secretory proteins during granule formation in the TGN. The sequence is that of Zymogen granule membrane protein 16 (Zg16) from Mus musculus (Mouse).